A 359-amino-acid chain; its full sequence is 4-galactosyl-N-acetylglucosaminide 3-alpha-L-fucosyltransferase 9 (359 aa).

Residues 1 to 11 (MTSTSKGILRP) lie on the Cytoplasmic side of the membrane. Residues 12–32 (FLIVCIILGCFVACLLIYIKP) form a helical; Signal-anchor for type II membrane protein membrane-spanning segment. Topologically, residues 33–359 (TNSWVFSPME…VGNLEKWFWN (327 aa)) are lumenal. A glycan (N-linked (GlcNAc...) asparagine) is linked at asparagine 62. The acceptor-binding stretch occupies residues 63–168 (ETTILVWVWP…RRDSDIQVPY (106 aa)). A beta-D-galactosyl-(1-&gt;4)-N-acetyl-beta-D-glucosaminyl derivative is bound at residue glutamine 75. 3 disulfide bridges follow: cysteine 82–cysteine 335, cysteine 91–cysteine 338, and cysteine 190–cysteine 238. Asparagine 101 is a glycosylation site (N-linked (GlcNAc...) asparagine). Glutamate 137 is a binding site for a beta-D-galactosyl-(1-&gt;4)-N-acetyl-beta-D-glucosaminyl derivative. Residue glutamate 137 is the Nucleophile of the active site. Residue glutamate 137 coordinates GDP-beta-L-fucose. N-linked (GlcNAc...) asparagine glycosylation occurs at asparagine 153. Residues tyrosine 168, valine 192, serine 194, asparagine 195, arginine 202, valine 226, tyrosine 241, asparagine 246, tyrosine 252, glutamate 255, and lysine 256 each coordinate GDP-beta-L-fucose. The interval 169 to 326 (GFLTVSTSPF…NWRKDFTVNL (158 aa)) is donor-binding. Residues 327 to 359 (PRFWESHACLACDHVKRHQEYKSVGNLEKWFWN) form an acceptor-binding region.

The protein belongs to the glycosyltransferase 10 family. In terms of assembly, homodimer. Post-translationally, N-glycosylated with complex-type N-glycans.

The protein localises to the golgi apparatus. It localises to the trans-Golgi network membrane. It is found in the golgi apparatus membrane. The enzyme catalyses a beta-D-galactosyl-(1-&gt;4)-N-acetyl-beta-D-glucosaminyl derivative + GDP-beta-L-fucose = a beta-D-galactosyl-(1-&gt;4)-[alpha-L-fucosyl-(1-&gt;3)]-N-acetyl-beta-D-glucosaminyl derivative + GDP + H(+). The catalysed reaction is an alpha-Neu5Ac-(2-&gt;3)-beta-D-Gal-(1-&gt;4)-beta-D-GlcNAc-(1-&gt;3)-beta-D-Gal-(1-&gt;4)-beta-D-GlcNAc derivative + GDP-beta-L-fucose = an alpha-Neu5Ac-(2-&gt;3)-beta-D-Gal-(1-&gt;4)-beta-D-GlcNAc-(1-&gt;3)-beta-D-Gal-(1-&gt;4)-[alpha-L-Fuc-(1-&gt;3)]-beta-D-GlcNAc derivative + GDP + H(+). It catalyses the reaction alpha-N-glycoloylneuraminosyl-(2-&gt;3)-beta-D-galactosyl-(1-&gt;4)-N-acetyl-beta-D-glucosaminyl-(1-&gt;3)-beta-D-galactosyl-(1-&gt;4)-N-acetyl-beta-D-glucosaminyl-(1-&gt;3)-beta-D-galactosyl-(1-&gt;4)-beta-D-glucosyl-(1&lt;-&gt;1')-ceramide + GDP-beta-L-fucose = alpha-N-glycoloylneuraminosyl-(2-&gt;3)-beta-D-galactosyl-(1-&gt;4)-N-acetyl-beta-D-glucosaminyl-(1-&gt;3)-beta-D-galactosyl-(1-&gt;4)-[alpha-L-fucosyl-(1-&gt;3)]-N-acetyl-beta-D-glucosaminyl-(1-&gt;3)-beta-D-galactosyl-(1-&gt;4)-beta-D-glucosyl-(1&lt;-&gt;1')-ceramide + GDP + H(+). It carries out the reaction alpha-D-galactosyl-(1-&gt;3)-beta-D-galactosyl-(1-&gt;4)-N-acetyl-beta-D-glucosaminyl-(1-&gt;3)-beta-D-galactosyl-(1-&gt;4)-beta-D-glucosyl-(1&lt;-&gt;1')-ceramide + GDP-beta-L-fucose = a neolactoside IV(3)-alpha-Gal,III(3)-alpha-Fuc-nLc4Cer + GDP + H(+). The enzyme catalyses a neolactoside nLc4Cer + GDP-beta-L-fucose = a neolactoside III(3)-alpha-Fuc-nLc4Cer + GDP + H(+). The catalysed reaction is an N-acetyl-alpha-neuraminyl-(2-&gt;3)-beta-D-galactosyl-(1-&gt;4)-N-acetyl-beta-D-glucosaminyl derivative + GDP-beta-L-fucose = an alpha-Neu5Ac-(2-&gt;3)-beta-D-Gal-(1-&gt;4)-[alpha-L-Fuc-(1-&gt;3)]-beta-D-GlcNAc derivative + GDP + H(+). It catalyses the reaction beta-D-Gal-(1-&gt;4)-beta-D-GlcNAc-(1-&gt;3)-beta-D-Gal-(1-&gt;4)-D-Glc + GDP-beta-L-fucose = beta-D-Gal-(1-&gt;4)-[alpha-L-Fuc-(1-&gt;3)]-beta-D-GlcNAc-(1-&gt;3)-beta-D-Gal-(1-&gt;4)-D-Glc + GDP + H(+). It carries out the reaction an alpha-L-Fuc-(1-&gt;2)-beta-D-Gal-(1-&gt;4)-beta-D-GlcNAc derivative + GDP-beta-L-fucose = an alpha-L-Fuc-(1-&gt;2)-beta-D-Gal-(1-&gt;4)-[alpha-L-Fuc-(1-&gt;3)]-beta-D-GlcNAc derivative + GDP + H(+). Its pathway is protein modification; protein glycosylation. It participates in glycolipid biosynthesis. With respect to regulation, activated by Mn2+. In terms of biological role, catalyzes alpha(1-&gt;3) linkage of fucosyl moiety transferred from GDP-beta-L-fucose to N-acetyl glucosamine (GlcNAc) within type 2 lactosamine (LacNAc, beta-D-Gal-(1-&gt;4)-beta-D-GlcNAc-) glycan attached to glycolipids and N- or O-linked glycoproteins. Fucosylates distal type 2 LacNAc and its fucosylated (H-type 2 LacNAc) and sialylated (sialyl-type 2 LacNAc) derivatives to form Lewis x (Lex) (CD15) and Lewis y (Ley) antigenic epitopes involved in cell adhesion and differentiation. Generates Lex epitopes in the brain, presumably playing a role in the maintenance of neuronal stemness and neurite outgrowth in progenitor neural cells. Fucosylates the internal type 2 LacNAc unit of the polylactosamine chain to form VIM-2 antigen that serves as recognition epitope for SELE. Can also modify milk oligosaccharides in particular type 2 tetrasaccharide LNnT. The protein is 4-galactosyl-N-acetylglucosaminide 3-alpha-L-fucosyltransferase 9 of Rattus norvegicus (Rat).